Here is a 430-residue protein sequence, read N- to C-terminus: MAARLLLRSLRVLKARSAPRPPPSARCSHSGAEARLETPSAKKLTDVGIRRIFSSEHDIFRESVRKFFQEEVIPHHTEWEKAGEVSREVWEKAGKQGLLGINIAEKHGGIGGDLLSTAVTWEEQAYSNCTGPGFSLHSDIVMPYIANYGTKEQIEKFIPQMTAGKCIGAIAMTEPGAGSDLQGVRTNAKRSGSDWILNGSKVFITNGWLSDLVIVVAVTNREARSPAHGISLFLVENGMKGFIKGRKLHKMGMKAQDTAELFFEDVRLPANALLGEENKGFYYLMQELPQERLLIAELAISACEFMFEETRNYVKQRKAFGKTVAHIQTVQHKLAELKTHICVTRAFVDSCLQLHETKRLDSGSASMAKYWASELQNSVAYECVQLHGGWGYMWEYPIAKAYVDARVQPIYGGTNEIMKELIARQIVSDS.

A mitochondrion-targeting transit peptide spans 1–30; it reads MAARLLLRSLRVLKARSAPRPPPSARCSHS. The interval 17 to 39 is disordered; the sequence is SAPRPPPSARCSHSGAEARLETP. Lys42 carries the N6-acetyllysine modification. 2 positions are modified to phosphoserine: Ser54 and Ser55. 2 positions are modified to N6-acetyllysine; alternate: Lys66 and Lys81. N6-succinyllysine; alternate is present on residues Lys66 and Lys81. An N6-acetyllysine mark is found at Lys92 and Lys95. Lys165 is modified (N6-succinyllysine). Residue 170–179 coordinates FAD; the sequence is IAMTEPGAGS. Ser179 lines the substrate pocket. At Ser191 the chain carries Phosphoserine. 203–205 lines the FAD pocket; the sequence is FIT. 227-228 is a substrate binding site; the sequence is AH. An N6-succinyllysine modification is found at Lys240. N6-acetyllysine; alternate occurs at positions 254 and 279. 2 positions are modified to N6-succinyllysine; alternate: Lys254 and Lys279. Substrate is bound by residues Tyr282 and 289-292; that span reads PQER. Residue Glu291 is the Proton acceptor of the active site. Arg317 contacts FAD. An N6-acetyllysine modification is found at Lys318. Lys322 bears the N6-acetyllysine; alternate mark. Lys322 carries the post-translational modification N6-succinyllysine; alternate. Gln328 serves as a coordination point for FAD. Lys358 bears the N6-acetyllysine mark. Ser362 is subject to Phosphoserine. FAD is bound at residue 385-389; the sequence is QLHGG. 412-413 provides a ligand contact to substrate; sequence GG. 414 to 416 serves as a coordination point for FAD; the sequence is TNE.

It belongs to the acyl-CoA dehydrogenase family. In terms of assembly, homotetramer. It depends on FAD as a cofactor. Acetylation at Lys-318 and Lys-322 in proximity of the cofactor-binding sites strongly reduces catalytic activity. These sites are deacetylated by SIRT3. As to expression, expressed in heart, skeletal muscle, kidney, and brain. Expressed in liver (at protein level).

The protein localises to the mitochondrion matrix. The enzyme catalyses a long-chain 2,3-saturated fatty acyl-CoA + oxidized [electron-transfer flavoprotein] + H(+) = a long-chain (2E)-enoyl-CoA + reduced [electron-transfer flavoprotein]. It catalyses the reaction oxidized [electron-transfer flavoprotein] + hexadecanoyl-CoA + H(+) = (2E)-hexadecenoyl-CoA + reduced [electron-transfer flavoprotein]. It carries out the reaction hexanoyl-CoA + oxidized [electron-transfer flavoprotein] + H(+) = (2E)-hexenoyl-CoA + reduced [electron-transfer flavoprotein]. The catalysed reaction is octanoyl-CoA + oxidized [electron-transfer flavoprotein] + H(+) = (2E)-octenoyl-CoA + reduced [electron-transfer flavoprotein]. The enzyme catalyses decanoyl-CoA + oxidized [electron-transfer flavoprotein] + H(+) = (2E)-decenoyl-CoA + reduced [electron-transfer flavoprotein]. It catalyses the reaction dodecanoyl-CoA + oxidized [electron-transfer flavoprotein] + H(+) = (2E)-dodecenoyl-CoA + reduced [electron-transfer flavoprotein]. It carries out the reaction tetradecanoyl-CoA + oxidized [electron-transfer flavoprotein] + H(+) = (2E)-tetradecenoyl-CoA + reduced [electron-transfer flavoprotein]. The catalysed reaction is octadecanoyl-CoA + oxidized [electron-transfer flavoprotein] + H(+) = (2E)-octadecenoyl-CoA + reduced [electron-transfer flavoprotein]. The enzyme catalyses eicosanoyl-CoA + oxidized [electron-transfer flavoprotein] + H(+) = (2E)-eicosenoyl-CoA + reduced [electron-transfer flavoprotein]. It catalyses the reaction docosanoyl-CoA + oxidized [electron-transfer flavoprotein] + H(+) = (2E)-docosenoyl-CoA + reduced [electron-transfer flavoprotein]. It carries out the reaction tetracosanoyl-CoA + oxidized [electron-transfer flavoprotein] + H(+) = (2E)-tetracosenoyl-CoA + reduced [electron-transfer flavoprotein]. The catalysed reaction is (5E)-tetradecenoyl-CoA + oxidized [electron-transfer flavoprotein] + H(+) = (2E,5E)-tetradecadienoyl-CoA + reduced [electron-transfer flavoprotein]. The enzyme catalyses (5Z)-tetradecenoyl-CoA + oxidized [electron-transfer flavoprotein] + H(+) = (2E,5Z)-tetradecadienoyl-CoA + reduced [electron-transfer flavoprotein]. It catalyses the reaction oxidized [electron-transfer flavoprotein] + (9Z)-octadecenoyl-CoA + H(+) = (2E,9Z)-octadecadienoyl-CoA + reduced [electron-transfer flavoprotein]. It functions in the pathway lipid metabolism; mitochondrial fatty acid beta-oxidation. Functionally, long-chain specific acyl-CoA dehydrogenase is one of the acyl-CoA dehydrogenases that catalyze the first step of mitochondrial fatty acid beta-oxidation, an aerobic process breaking down fatty acids into acetyl-CoA and allowing the production of energy from fats. The first step of fatty acid beta-oxidation consists in the removal of one hydrogen from C-2 and C-3 of the straight-chain fatty acyl-CoA thioester, resulting in the formation of trans-2-enoyl-CoA. Among the different mitochondrial acyl-CoA dehydrogenases, long-chain specific acyl-CoA dehydrogenase can act on saturated and unsaturated acyl-CoAs with 6 to 24 carbons with a preference for 8 to 18 carbons long primary chains. This chain is Long-chain specific acyl-CoA dehydrogenase, mitochondrial, found in Mus musculus (Mouse).